The chain runs to 481 residues: RuvB-like helicase 2 (481 aa).

Position 73-80 (73-80 (GEPSTGKT)) interacts with ATP. A disordered region spans residues 453–481 (EEVERDPAAGGGAKRRVEGGGGDAQPMEH).

Belongs to the RuvB family. Forms homohexameric rings. May form a dodecamer with rept made of two stacked hexameric rings. Component of the chromatin remodeling Ino80 complex. Interacts with Myc and pont. As to expression, higher expression occurs in primordia of mesoderm, anterior and posterior midgut and cephalic furrow early in gastrulation, as well as in endoderm and mesoderm lineages during germ band extension. Later in development expression is only maintained in endoderm cells. Expressed in thoracic and abdominal segment neural precursors of all embryonic chordotonal organs.

It localises to the nucleus. It carries out the reaction ATP + H2O = ADP + phosphate + H(+). Functionally, acts as a transcriptional coactivator in Wg signaling caused by altered arm signaling. Pont and rept interfere antagonistically with nuclear arm signaling function, and are required to enhance or reduce arm activity, respectively. Also an essential cofactor for the normal function of Myc; required for cellular proliferation and growth. Its function is as follows. Proposed core component of the chromatin remodeling Ino80 complex which is involved in transcriptional regulation, DNA replication and probably DNA repair. The protein is RuvB-like helicase 2 of Drosophila melanogaster (Fruit fly).